Consider the following 396-residue polypeptide: Cytochrome b (396 aa).

4 consecutive transmembrane segments (helical) span residues Phe32 to Met52, Trp76 to Gly98, Leu113 to Val133, and Phe179 to Leu199. Heme b contacts are provided by His82 and His96. His183 and His197 together coordinate heme b. His202 contributes to the a ubiquinone binding site. A run of 4 helical transmembrane segments spans residues Phe225–Phe245, Leu289–His309, Leu321–Ala341, and Tyr348–Ile368.

It belongs to the cytochrome b family. Fungal cytochrome b-c1 complex contains 10 subunits; 3 respiratory subunits, 2 core proteins and 5 low-molecular weight proteins. Cytochrome b-c1 complex is a homodimer. It depends on heme b as a cofactor.

It localises to the mitochondrion inner membrane. Functionally, component of the ubiquinol-cytochrome c reductase complex (complex III or cytochrome b-c1 complex) that is part of the mitochondrial respiratory chain. The b-c1 complex mediates electron transfer from ubiquinol to cytochrome c. Contributes to the generation of a proton gradient across the mitochondrial membrane that is then used for ATP synthesis. This is Cytochrome b (cob) from Spizellomyces punctatus.